Here is a 477-residue protein sequence, read N- to C-terminus: MTLRLFDTKAGALRDFVPLRSGEVGMYVCGPTVQASPHIGHLRSALVYDQLRRWLTYRGLAVTLVRNVTDIDDKVLANAAAAQAEGGSEQWWALAYRFEREFTAASVALGVQAPTYEPRATASIPQMQEIIQRLIERGHAYAAGDGSGDVYFDVRSWPAYGELTRQSADSMEAAADADPRAKRDGRDFALWKGRKADEPDSAAFPSPWGEGRPGWHIECSAMSRRYLGPRFDIHGGGLDLRFPHHENELAQSAAAGDSFANYWVHNGLVNVNGQKMSKSLGNSVSAAELLGAARPLAVRYSLGSAHYRSTIDYHDGSLSEAEAALERIAGFFERVDRRLAGTRFTGSGSEVVPIAFAEAMDDDLAVPQALAVLHETVRSGNAALDAEDLEAAAAARGQVFAMTEVLGINPLSPQWRQTGSSAAEQALGTLVERLLHNRQEARQVRDFVAADRIREELTGAGITIEDTPTGCHWSIEA.

A Zn(2+)-binding site is contributed by Cys-29. Residues 31 to 41 carry the 'HIGH' region motif; sequence PTVQASPHIGH. Zn(2+) is bound by residues Cys-219, His-244, and Glu-248. The 'KMSKS' region signature appears at 275–279; sequence KMSKS. Lys-278 lines the ATP pocket.

It belongs to the class-I aminoacyl-tRNA synthetase family. In terms of assembly, monomer. The cofactor is Zn(2+).

It localises to the cytoplasm. The enzyme catalyses tRNA(Cys) + L-cysteine + ATP = L-cysteinyl-tRNA(Cys) + AMP + diphosphate. The chain is Cysteine--tRNA ligase from Leifsonia xyli subsp. xyli (strain CTCB07).